We begin with the raw amino-acid sequence, 942 residues long: VPS35 endosomal protein sorting factor-like (942 aa).

It belongs to the VPS35L family. Component of the heterotrimeric retriever complex.

Its subcellular location is the endosome. Functionally, acts as a component of the retriever complex. The retriever complex is a heterotrimeric complex related to retromer cargo-selective complex (CSC) and essential for retromer-independent retrieval and recycling of numerous cargos. This chain is VPS35 endosomal protein sorting factor-like, found in Drosophila melanogaster (Fruit fly).